The following is a 576-amino-acid chain: DNA primase (576 aa).

The segment at 40 to 64 (CPFHNEKTPSFNVVAKKQFYHCFGC) adopts a CHC2-type zinc-finger fold. Residues 251–333 (DSIIVVEGYM…GLDAGFIFLP (83 aa)) enclose the Toprim domain. Residues Glu257, Asp301, and Asp303 each contribute to the Mg(2+) site.

This sequence belongs to the DnaG primase family. As to quaternary structure, monomer. Interacts with DnaB. The cofactor is Zn(2+). Mg(2+) is required as a cofactor.

It catalyses the reaction ssDNA + n NTP = ssDNA/pppN(pN)n-1 hybrid + (n-1) diphosphate.. In terms of biological role, RNA polymerase that catalyzes the synthesis of short RNA molecules used as primers for DNA polymerase during DNA replication. The protein is DNA primase of Legionella pneumophila.